A 105-amino-acid polypeptide reads, in one-letter code: MAEVTYKGKSFEVDEDGFLLRFDDWCPEWVEYVKESEGISDISPDHQKIIDFLQDYYKKNGIAPMVRILSKNTGFKLKEVYELFPSGPGKGACKMAGLPKPTGCV.

This sequence belongs to the DsrC/TusE family. Heterohexamer of two alpha, two beta and two gamma subunits.

It localises to the cytoplasm. It catalyses the reaction [DsrC protein]-trisulfide + NAD(+) + 3 H2O = [DsrC protein]-dithiol + sulfite + NADH + 3 H(+). Its function is as follows. Catalyzes the reduction of sulfite to sulfide. This is the terminal oxidation reaction in sulfate respiration, a process catalyzed by the sulfate-reducing bacteria. In Nitratidesulfovibrio vulgaris (strain ATCC 29579 / DSM 644 / CCUG 34227 / NCIMB 8303 / VKM B-1760 / Hildenborough) (Desulfovibrio vulgaris), this protein is Sulfite reductase, dissimilatory-type subunit gamma (dsvC).